The chain runs to 196 residues: MSRYRGPRFKKIRRLGALPGLTSKRPRSGSDLKNPLRSVKKSQYRIRLEEKQKLRFHYGLTERQLLRYVHIAGKAKGSTGQVLLQLLEMRLDNILFRLGMASTIPGARQLVNHRHILVNGRIVDIPSYRCKPRDIITTKDKQRSKALIQTSIASSPHEELPNHLTIDSFQYKGLINQIIDSKWIGLKINELLVVEY.

One can recognise an S4 RNA-binding domain in the interval 89 to 149 (MRLDNILFRL…DKQRSKALIQ (61 aa)).

This sequence belongs to the universal ribosomal protein uS4 family. Part of the 30S ribosomal subunit. Contacts protein S5. The interaction surface between S4 and S5 is involved in control of translational fidelity.

Its subcellular location is the plastid. It is found in the chloroplast. Its function is as follows. One of the primary rRNA binding proteins, it binds directly to 16S rRNA where it nucleates assembly of the body of the 30S subunit. With S5 and S12 plays an important role in translational accuracy. The chain is Small ribosomal subunit protein uS4c (rps4) from Asparagus maritimus (Sea asparagus).